Here is a 250-residue protein sequence, read N- to C-terminus: 3-deoxy-manno-octulosonate cytidylyltransferase (250 aa).

This sequence belongs to the KdsB family.

The protein localises to the cytoplasm. The catalysed reaction is 3-deoxy-alpha-D-manno-oct-2-ulosonate + CTP = CMP-3-deoxy-beta-D-manno-octulosonate + diphosphate. It participates in nucleotide-sugar biosynthesis; CMP-3-deoxy-D-manno-octulosonate biosynthesis; CMP-3-deoxy-D-manno-octulosonate from 3-deoxy-D-manno-octulosonate and CTP: step 1/1. It functions in the pathway bacterial outer membrane biogenesis; lipopolysaccharide biosynthesis. Activates KDO (a required 8-carbon sugar) for incorporation into bacterial lipopolysaccharide in Gram-negative bacteria. In Pectobacterium atrosepticum (strain SCRI 1043 / ATCC BAA-672) (Erwinia carotovora subsp. atroseptica), this protein is 3-deoxy-manno-octulosonate cytidylyltransferase.